The chain runs to 921 residues: Extended synaptotagmin-2 (921 aa).

Residues 1 to 103 (MTANRDAALS…RPGGPENPGG (103 aa)) are Cytoplasmic-facing. The interval 1–103 (MTANRDAALS…RPGGPENPGG (103 aa)) is disordered. Residues 58–75 (GARRRAKTARGLRGHRQR) are compositionally biased toward basic residues. Residues 104-124 (VLSVELPGLLAQLARSFALLL) traverse the membrane as a helical segment. Topologically, residues 125-127 (PVY) are lumenal. Residues 128–148 (ALGYLGLSFSWVLLALALLAW) form a helical membrane-spanning segment. The Cytoplasmic portion of the chain corresponds to 149–921 (CRRSRGLKAL…EDGTRPQAMT (773 aa)). The SMP-LTD domain maps to 191–370 (DTERAEWLNK…LPNRITVPLV (180 aa)). 2 consecutive C2 domains span residues 369–489 (LVSE…DEWF) and 514–639 (NLDK…QLSN). Positions 400, 401, 413, 460, 461, 462, 464, 466, and 467 each coordinate Ca(2+). The tract at residues 660–754 (RERPPDHQHS…GHISVKEPTP (95 aa)) is disordered. Serine 691 and serine 693 each carry phosphoserine. Threonine 705 bears the Phosphothreonine mark. Residues serine 736, serine 738, serine 739, serine 743, serine 748, serine 755, serine 758, and serine 761 each carry the phosphoserine modification. The C2 3 domain occupies 786 to 908 (PLGQIQLTIR…ELAKGWTQWY (123 aa)). The tract at residues 833 to 840 (KRRSGRRK) is required for phosphatidylinositol 4,5-bisphosphate-dependent location at the cell membrane.

The protein belongs to the extended synaptotagmin family. In terms of assembly, homodimer. Interacts with ESYT1 and ESYT3. Interacts with FGFR1 that has been activated by FGF1 binding. Interacts with the AP-2 complex; identified in a complex with the AP-2 complex and FGFR1. Widely expressed with high level in cerebellum.

The protein resides in the cell membrane. Its subcellular location is the endoplasmic reticulum membrane. In terms of biological role, tethers the endoplasmic reticulum to the cell membrane and promotes the formation of appositions between the endoplasmic reticulum and the cell membrane. Binds glycerophospholipids in a barrel-like domain and may play a role in cellular lipid transport. Plays a role in FGF signaling via its role in the rapid internalization of FGFR1 that has been activated by FGF1 binding; this occurs most likely via the AP-2 complex. Promotes the localization of SACM1L at endoplasmic reticulum-plasma membrane contact sites (EPCS). The protein is Extended synaptotagmin-2 of Homo sapiens (Human).